The sequence spans 78 residues: Large ribosomal subunit protein bL28 (78 aa).

A disordered region spans residues 1–23 (MSRVCQVSGKRVQTGNNVSHANN). Residues 11–22 (RVQTGNNVSHAN) show a composition bias toward polar residues.

The protein belongs to the bacterial ribosomal protein bL28 family.

The polypeptide is Large ribosomal subunit protein bL28 (Xanthomonas campestris pv. campestris (strain 8004)).